Here is a 381-residue protein sequence, read N- to C-terminus: MDINIDKYKNITRNLERDIVNLNPIQRGGILPTEAKKVIYEYWDGYSVCDYCSGRLDKIETPPINEFLDDMSKFLGMDITRPTHGARESKYAVMNAICKKGDYVVLDGNSHYTSYVALERANLNYVKTDVEEYPNFRVIPKSYAEKIDELEDSGKNIGLILLTHVDGSYGNVSDVSKVGKIAKSKGYPLLLNCAYSVGRMPVDGKKLNVDFIAASGHKSMAASGPCGLLSINAEYEDEILKTSKVNVVKELQMLGCTSRGIPILSLMASFPHIIERVKNWNLELEKTRKVVFEFEKLGFIALGEKPRNHDIIRFETPVLDKIAEKDKRRGFFFYEELKKRGIGGIRRGVTKEFKMSVYGLTGMQVDYIIDCIKSIVLENAN.

Residues 86–87, Asn192, and 215–217 each bind pyridoxal 5'-phosphate; these read AR and SGH. An N6-(pyridoxal phosphate)lysine modification is found at Lys218.

Belongs to the SepCysS family. As to quaternary structure, homodimer. Interacts with SepRS. The cofactor is pyridoxal 5'-phosphate.

The enzyme catalyses O-phospho-L-seryl-tRNA(Cys) + hydrogen sulfide + H(+) = L-cysteinyl-tRNA(Cys) + phosphate. Converts O-phospho-L-seryl-tRNA(Cys) (Sep-tRNA(Cys)) to L-cysteinyl-tRNA(Cys) (Cys-tRNA(Cys)). This chain is O-phospho-L-seryl-tRNA:Cys-tRNA synthase, found in Methanococcus vannielii (strain ATCC 35089 / DSM 1224 / JCM 13029 / OCM 148 / SB).